The chain runs to 346 residues: Small ribosomal subunit biogenesis GTPase RsgA 1 (346 aa).

One can recognise a CP-type G domain in the interval 93–248 (EEQLIAANFD…IIDTPGMREF (156 aa)). Residues 138-141 (TKAD) and 190-198 (GSSGVGKSS) contribute to the GTP site. Positions 271, 276, 278, and 284 each coordinate Zn(2+).

This sequence belongs to the TRAFAC class YlqF/YawG GTPase family. RsgA subfamily. Monomer. Associates with 30S ribosomal subunit, binds 16S rRNA. Zn(2+) serves as cofactor.

Its subcellular location is the cytoplasm. One of several proteins that assist in the late maturation steps of the functional core of the 30S ribosomal subunit. Helps release RbfA from mature subunits. May play a role in the assembly of ribosomal proteins into the subunit. Circularly permuted GTPase that catalyzes slow GTP hydrolysis, GTPase activity is stimulated by the 30S ribosomal subunit. In Listeria innocua serovar 6a (strain ATCC BAA-680 / CLIP 11262), this protein is Small ribosomal subunit biogenesis GTPase RsgA 1.